The primary structure comprises 311 residues: Malate dehydrogenase (311 aa).

NAD(+) contacts are provided by residues 7-13 and Asp-34; that span reads GAAGGIG. The substrate site is built by Arg-81 and Arg-87. Residues Asn-94 and 117 to 119 contribute to the NAD(+) site; that span reads ITN. Substrate contacts are provided by Asn-119 and Arg-153. Residue His-177 is the Proton acceptor of the active site. Met-227 is a binding site for NAD(+).

Belongs to the LDH/MDH superfamily. MDH type 1 family. In terms of assembly, homodimer.

The enzyme catalyses (S)-malate + NAD(+) = oxaloacetate + NADH + H(+). Catalyzes the reversible oxidation of malate to oxaloacetate. The chain is Malate dehydrogenase from Shewanella piezotolerans (strain WP3 / JCM 13877).